Here is a 556-residue protein sequence, read N- to C-terminus: Cell wall integrity and stress response component 3 (556 aa).

An N-terminal signal peptide occupies residues 1-38 (MERVWFAKLTNKGTIKIGYISFILLSLLCQSLIGLVNA). One can recognise a WSC domain in the interval 39-132 (DFNYEGCYSA…SSYMNVYVNA (94 aa)). At 39 to 384 (DFNYEGCYSA…QRLSGGAIAG (346 aa)) the chain is on the extracellular side. The N-linked (GlcNAc...) asparagine glycan is linked to Asn84. Composition is skewed to low complexity over residues 142–169 (SSSK…SSTT) and 184–257 (TTVS…STTS). Disordered regions lie at residues 142–257 (SSSK…STTS) and 269–312 (TLSS…PSTS). N-linked (GlcNAc...) asparagine glycans are attached at residues Asn367 and Asn370. A helical membrane pass occupies residues 385 to 405 (IVIGVVFGVIFIILILLFLIW). Residues 406 to 556 (RRRKSHDQLD…LSSTVSHNRA (151 aa)) are Cytoplasmic-facing. Disordered stretches follow at residues 425–444 (YSFG…SGTT) and 534–556 (LQVV…HNRA). The span at 546–556 (ELSSTVSHNRA) shows a compositional bias: polar residues.

Its subcellular location is the membrane. The protein is Cell wall integrity and stress response component 3 (WSC3) of Saccharomyces cerevisiae (strain ATCC 204508 / S288c) (Baker's yeast).